We begin with the raw amino-acid sequence, 358 residues long: Alternative oxidase, mitochondrial (358 aa).

A helical transmembrane segment spans residues 152-172; it reads LIRYVFLESVAGVPGMVAGML. Fe cation contacts are provided by glutamate 159, glutamate 198, and histidine 201. A helical transmembrane segment spans residues 218-238; that stretch reads MILGAQGVFFNSFFLCYLFSP. Positions 249, 306, and 309 each coordinate Fe cation.

The protein belongs to the alternative oxidase family. Fe cation serves as cofactor.

It localises to the mitochondrion inner membrane. Its function is as follows. Catalyzes cyanide-resistant oxygen consumption. May increase respiration when the cytochrome respiratory pathway is restricted, or in response to low temperatures. This Monilinia fructicola (Brown rot fungus) protein is Alternative oxidase, mitochondrial (AOX1).